A 53-amino-acid polypeptide reads, in one-letter code: Non-classical export protein 1 (53 aa).

Residues 7–29 (FLLGKFSDPLLAIMVGCLSYYVY) traverse the membrane as a helical segment.

This sequence belongs to the NCE101 family.

It is found in the membrane. Involved in a novel pathway of export of proteins that lack a cleavable signal sequence. May be part of the export machinery or may also be a substrate for non-classical export. The polypeptide is Non-classical export protein 1 (NCE101) (Saccharomyces cerevisiae (strain ATCC 204508 / S288c) (Baker's yeast)).